Consider the following 654-residue polypeptide: C6 finger domain transcription factor nscR (654 aa).

A DNA-binding region (zn(2)-C6 fungal-type) is located at residues 17–43 (CELCRERKVKCDKLDPCTNCSSAGVIC).

It localises to the nucleus. Transcription factor that specifically regulates the neosartoricin B biosynthesis gene cluster. The sequence is that of C6 finger domain transcription factor nscR from Trichophyton verrucosum (strain HKI 0517).